Here is a 430-residue protein sequence, read N- to C-terminus: Retinoic acid receptor RXR-alpha-A (430 aa).

Residues 1-20 (MHPSLLSPTSLGPSGSLHSP) show a composition bias toward low complexity. Disordered stretches follow at residues 1–25 (MHPS…STLS) and 48–73 (ASPG…SSSE). A modulating region spans residues 1–99 (MHPSLLSPTS…QPSGTPLSLT (99 aa)). Over residues 58 to 72 (ISPQLNSHMNSVSSS) the composition is skewed to polar residues. A DNA-binding region (nuclear receptor) is located at residues 100–175 (KHICAICGDR…MGMKREAVQE (76 aa)). Zn(2+) contacts are provided by cysteine 103, cysteine 106, cysteine 120, and cysteine 123. The NR C4-type zinc-finger motif lies at 103–123 (CAICGDRSSGKHYGVYSCEGC). Residues 128-133 (KRTVRK) form a nuclear localization signal region. Zn(2+) contacts are provided by cysteine 139, cysteine 145, cysteine 155, and cysteine 158. The NR C4-type zinc-finger motif lies at 139 to 158 (CRDNKDCVIDKRQRNRCQYC). The span at 174-186 (QEERQRAKERSEN) shows a compositional bias: basic and acidic residues. Residues 174-196 (QEERQRAKERSENEVESTSSANE) form a disordered region. Positions 176 to 192 (ERQRAKERSENEVESTS) are hinge. The 232-residue stretch at 195-426 (NEDMPVEKIL…TFLMEMLEAP (232 aa)) folds into the NR LBD domain. 9-cis-retinoate-binding residues include arginine 284 and alanine 295. Residues arginine 284 and alanine 295 each coordinate all-trans-retinoate. The interval 316–336 (RVLTELVSKMRDMQMDKTELG) is required for nuclear export. The segment at 415–426 (IDTFLMEMLEAP) is AF-2.

This sequence belongs to the nuclear hormone receptor family. NR2 subfamily. Homodimer. Heterodimer; with a rar molecule. Binds DNA preferentially as a rar/rxr heterodimer.

Its subcellular location is the nucleus. Receptor for retinoic acid that acts as a transcription factor. Forms homo- or heterodimers with retinoic acid receptors (rars) and binds to target response elements in response to their ligands, all-trans or 9-cis retinoic acid, to regulate gene expression in various biological processes. The rar/rxr heterodimers bind to the retinoic acid response elements (RARE) composed of tandem 5'-AGGTCA-3' sites known as DR1-DR5 to regulate transcription. The high affinity ligand for rxrs is 9-cis retinoic acid. In the absence of ligand, the rar/rxr heterodimers associate with a multiprotein complex containing transcription corepressors that induce histone deacetylation, chromatin condensation and transcriptional suppression. On ligand binding, the corepressors dissociate from the receptors and coactivators are recruited leading to transcriptional activation. This chain is Retinoic acid receptor RXR-alpha-A, found in Danio rerio (Zebrafish).